The following is a 573-amino-acid chain: Sulfite reductase [NADPH] hemoprotein beta-component (573 aa).

Positions 438, 444, 483, and 487 each coordinate [4Fe-4S] cluster. Cysteine 487 contacts siroheme.

It belongs to the nitrite and sulfite reductase 4Fe-4S domain family. In terms of assembly, alpha(8)-beta(8). The alpha component is a flavoprotein, the beta component is a hemoprotein. Siroheme is required as a cofactor. The cofactor is [4Fe-4S] cluster.

It catalyses the reaction hydrogen sulfide + 3 NADP(+) + 3 H2O = sulfite + 3 NADPH + 4 H(+). It participates in sulfur metabolism; hydrogen sulfide biosynthesis; hydrogen sulfide from sulfite (NADPH route): step 1/1. Component of the sulfite reductase complex that catalyzes the 6-electron reduction of sulfite to sulfide. This is one of several activities required for the biosynthesis of L-cysteine from sulfate. The protein is Sulfite reductase [NADPH] hemoprotein beta-component of Nitrosomonas eutropha (strain DSM 101675 / C91 / Nm57).